A 146-amino-acid polypeptide reads, in one-letter code: MGFLRRLIYRRRPMIYVESSEESSDEQPDEVESPTQSQDSTPAEEREDEGASAAQGQEPEADSQELVQPKTGCELGDGPDTKRVCLRNEEQMKLPAEGPEPEADSQEQVHPKTGCERGDGPDVQELGLPNPEEVKTPEEDEGQSQP.

Residues 16-146 (YVESSEESSD…PEEDEGQSQP (131 aa)) are disordered. Residues 19 to 32 (SSEESSDEQPDEVE) show a composition bias toward acidic residues. Position 63 is a phosphoserine (serine 63). Over residues 79–92 (PDTKRVCLRNEEQM) the composition is skewed to basic and acidic residues. At serine 105 the chain carries Phosphoserine. Residues 107-120 (EQVHPKTGCERGDG) are compositionally biased toward basic and acidic residues. Residue serine 144 is modified to Phosphoserine.

Belongs to the GAGE family. In terms of tissue distribution, isolated from prostate cancer cell lines; expression associated with progression to androgen insensitive phenotype. Expressed in normal testis and at lower level in normal placenta.

This chain is P antigen family member 1 (PAGE1), found in Homo sapiens (Human).